A 352-amino-acid chain; its full sequence is Threonine synthase (352 aa).

K59 carries the post-translational modification N6-(pyridoxal phosphate)lysine. Residues N85, 185–189, and T314 contribute to the pyridoxal 5'-phosphate site; that span reads GNAGN.

It belongs to the threonine synthase family. Pyridoxal 5'-phosphate serves as cofactor.

It carries out the reaction O-phospho-L-homoserine + H2O = L-threonine + phosphate. It functions in the pathway amino-acid biosynthesis; L-threonine biosynthesis; L-threonine from L-aspartate: step 5/5. Its function is as follows. Catalyzes the gamma-elimination of phosphate from L-phosphohomoserine and the beta-addition of water to produce L-threonine. The chain is Threonine synthase (thrC) from Bacillus sp. (strain ULM1).